The sequence spans 470 residues: 63 kDa sperm flagellar membrane protein (470 aa).

The first 25 residues, 1-25, serve as a signal peptide directing secretion; it reads MFCHLHCMLVVFSLLLTLTGSFVNA. One can recognise an EGF-like 1 domain in the interval 41 to 80; the sequence is PPDPCASNPCTIASTHCVAAGESHTCECRPGYFETNGNCT. Intrachain disulfides connect Cys-45–Cys-57, Cys-50–Cys-66, and Cys-68–Cys-79. Residues Asn-78, Asn-170, and Asn-219 are each glycosylated (N-linked (GlcNAc...) asparagine). An SEA domain is found at 81 to 205; it reads VAQQFAGSFS…STITVSDFDE (125 aa). The EGF-like 2; calcium-binding domain occupies 202 to 250; the sequence is DFDECASADDNDCDPNANCTNTAGSFTCECDTELYDNSPNTEEPGRVCI. Cystine bridges form between Cys-206-Cys-220, Cys-214-Cys-229, Cys-231-Cys-249, Cys-253-Cys-265, Cys-258-Cys-277, and Cys-279-Cys-291. The 44-residue stretch at 249–292 folds into the EGF-like 3 domain; sequence CIAPCDPGLCTRPNEICNNGGTIEDDNLCKCIEGYDYTQYGDCD. Asn-322 is a glycosylation site (N-linked (GlcNAc...) asparagine). Gly-446 carries GPI-anchor amidated glycine lipidation. Residues 447 to 470 constitute a propeptide, removed in mature form; it reads SQRHLPVCGVLSLVVTTLLALMLH.

Sperm.

It localises to the cell projection. The protein resides in the cilium. Its subcellular location is the flagellum membrane. The polypeptide is 63 kDa sperm flagellar membrane protein (Strongylocentrotus purpuratus (Purple sea urchin)).